Reading from the N-terminus, the 131-residue chain is UPF0382 inner membrane protein YgdD (131 aa).

Residues Met-1–Arg-4 are Periplasmic-facing. Residues Phe-5 to Ala-25 traverse the membrane as a helical segment. The Cytoplasmic portion of the chain corresponds to His-26–Arg-64. The helical transmembrane segment at Ile-65 to Gly-85 threads the bilayer. The Periplasmic portion of the chain corresponds to Ser-86–Leu-97. The chain crosses the membrane as a helical span at residues Trp-98–Val-118. The Cytoplasmic segment spans residues Gly-119–Glu-131.

The protein belongs to the UPF0382 family.

It is found in the cell inner membrane. The protein is UPF0382 inner membrane protein YgdD (ygdD) of Escherichia coli O157:H7.